A 606-amino-acid polypeptide reads, in one-letter code: Transmembrane 9 superfamily member 1 (606 aa).

A signal peptide spans 1–27; the sequence is MTVLGYPRSWSCHCLPVLILLLGIGHG. A glycan (N-linked (GlcNAc...) asparagine) is linked at Asn-178. A run of 4 helical transmembrane segments spans residues 237–257, 310–330, 339–359, and 373–393; these read LSIINSMVLVFLLVGFVAVIL, VLGVGAQFLALGTGIIVMALL, GAINSAAILLYALTCCISGYV, and VWNIILTSSLFSVPFFLTWSV. N-linked (GlcNAc...) asparagine glycosylation is present at Asn-401. The next 4 helical transmembrane spans lie at 412 to 432, 469 to 489, 499 to 519, and 535 to 555; these read ILLLLTVWLLVGFPLTVIGGI, VGGFLPFSAISVELYYIFATV, GILFFVFAILLSVGACISIAL, and SVLSVGSTGLFIFLYSVFYYA. The N-linked (GlcNAc...) asparagine glycan is linked to Asn-559. Residues 570-590 traverse the membrane as a helical segment; the sequence is FGYSLLTGYVFFLMLGTISFF.

It belongs to the nonaspanin (TM9SF) (TC 9.A.2) family.

The protein resides in the lysosome membrane. It localises to the cytoplasmic vesicle. Its subcellular location is the autophagosome membrane. Its function is as follows. Plays an essential role in autophagy. The protein is Transmembrane 9 superfamily member 1 (Tm9sf1) of Mus musculus (Mouse).